The chain runs to 700 residues: Putative cysteine-rich receptor-like protein kinase 30 (700 aa).

Residues 1–24 (MRQNNLFSLIFWLVPVSLIIVVSA) form the signal peptide. Gnk2-homologous domains are found at residues 25-129 (QLCS…NQPS) and 135-250 (LESV…LYPF). The Extracellular segment spans residues 25–285 (QLCSEKFGTF…KDEKTIHTGT (261 aa)). Residues asparagine 63, asparagine 105, asparagine 146, asparagine 150, and asparagine 191 are each glycosylated (N-linked (GlcNAc...) asparagine). A helical membrane pass occupies residues 286–306 (IIGIVIVVAMVIIMALLALGV). The Cytoplasmic portion of the chain corresponds to 307–700 (SVCRSRKKYQ…SKSMYRNTED (394 aa)). A Protein kinase domain is found at 346-626 (FLASNKIGQG…IFQMLTNSSI (281 aa)). ATP-binding positions include 352–360 (IGQGGFGEV) and lysine 374. Aspartate 474 (proton acceptor) is an active-site residue. Serine 478 is modified (phosphoserine). Threonine 514 bears the Phosphothreonine mark. Tyrosine 522 bears the Phosphotyrosine mark.

Belongs to the protein kinase superfamily. Ser/Thr protein kinase family. CRK subfamily.

The protein localises to the membrane. The catalysed reaction is L-seryl-[protein] + ATP = O-phospho-L-seryl-[protein] + ADP + H(+). It carries out the reaction L-threonyl-[protein] + ATP = O-phospho-L-threonyl-[protein] + ADP + H(+). The polypeptide is Putative cysteine-rich receptor-like protein kinase 30 (CRK30) (Arabidopsis thaliana (Mouse-ear cress)).